The chain runs to 290 residues: 4-diphosphocytidyl-2-C-methyl-D-erythritol kinase (290 aa).

Residue Lys-13 is part of the active site. 96–106 is a binding site for ATP; that stretch reads PMGGGIGGGSS. The active site involves Asp-138.

It belongs to the GHMP kinase family. IspE subfamily.

The catalysed reaction is 4-CDP-2-C-methyl-D-erythritol + ATP = 4-CDP-2-C-methyl-D-erythritol 2-phosphate + ADP + H(+). The protein operates within isoprenoid biosynthesis; isopentenyl diphosphate biosynthesis via DXP pathway; isopentenyl diphosphate from 1-deoxy-D-xylulose 5-phosphate: step 3/6. Catalyzes the phosphorylation of the position 2 hydroxy group of 4-diphosphocytidyl-2C-methyl-D-erythritol. The protein is 4-diphosphocytidyl-2-C-methyl-D-erythritol kinase of Vibrio cholerae serotype O1 (strain ATCC 39541 / Classical Ogawa 395 / O395).